The primary structure comprises 201 residues: Oligoribonuclease (201 aa).

The Exonuclease domain occupies 20–183 (LVWLDMEMTG…ADIHESIDEL (164 aa)). The active site involves Tyr-141.

It belongs to the oligoribonuclease family.

It is found in the cytoplasm. Functionally, 3'-to-5' exoribonuclease specific for small oligoribonucleotides. The protein is Oligoribonuclease of Burkholderia mallei (strain NCTC 10229).